The chain runs to 146 residues: 3-dehydroquinate dehydratase (146 aa).

The Proton acceptor role is filled by tyrosine 24. Asparagine 73, histidine 79, and aspartate 86 together coordinate substrate. Histidine 99 acts as the Proton donor in catalysis. Residues 100-101 (LS) and arginine 110 each bind substrate.

Belongs to the type-II 3-dehydroquinase family. In terms of assembly, homododecamer.

The catalysed reaction is 3-dehydroquinate = 3-dehydroshikimate + H2O. It participates in metabolic intermediate biosynthesis; chorismate biosynthesis; chorismate from D-erythrose 4-phosphate and phosphoenolpyruvate: step 3/7. Functionally, catalyzes a trans-dehydration via an enolate intermediate. The sequence is that of 3-dehydroquinate dehydratase from Shewanella oneidensis (strain ATCC 700550 / JCM 31522 / CIP 106686 / LMG 19005 / NCIMB 14063 / MR-1).